The sequence spans 799 residues: Rho GTPase-activating protein gacI (799 aa).

Positions 226–451 constitute a Rho-GAP domain; sequence IKLEEVFARE…LLVEHVLTIF (226 aa). Positions 472 to 520 are enriched in polar residues; it reads RSQSDISSQTKPLPSLPTSPQNRSAIITGDSSSPSLNTPPVKSSLNSSD. Disordered regions lie at residues 472-572 and 741-799; these read RSQS…PTSN and EKQQ…LSNQ. Residues 525–549 are compositionally biased toward low complexity; sequence DNGSNNNNNNNTTNTITNNGIADTA. Residues 550–568 show a composition bias toward pro residues; the sequence is TPPPPTTPTAPTTPPPPTT. Composition is skewed to low complexity over residues 743–752 and 759–791; these read QQQQQQQQTN and ISSN…LNSS.

The protein resides in the cytoplasm. In terms of biological role, rho GTPase-activating protein involved in the signal transduction pathway. The protein is Rho GTPase-activating protein gacI (gacI) of Dictyostelium discoideum (Social amoeba).